The primary structure comprises 452 residues: Exoglucanase 1 (452 aa).

Residues Met-1–Ala-18 form the signal peptide. N-linked (GlcNAc...) asparagine glycosylation is present at Asn-75. Glu-230 (nucleophile) is an active-site residue. The active-site Proton donor is Glu-235. 2 N-linked (GlcNAc...) asparagine glycosylation sites follow: Asn-335 and Asn-360.

This sequence belongs to the glycosyl hydrolase 7 (cellulase C) family.

It carries out the reaction Hydrolysis of (1-&gt;4)-beta-D-glucosidic linkages in cellulose and cellotetraose, releasing cellobiose from the non-reducing ends of the chains.. Functionally, the biological conversion of cellulose to glucose generally requires three types of hydrolytic enzymes: (1) Endoglucanases which cut internal beta-1,4-glucosidic bonds; (2) Exocellobiohydrolases that cut the disaccharide cellobiose from the non-reducing end of the cellulose polymer chain; (3) Beta-1,4-glucosidases which hydrolyze the cellobiose and other short cello-oligosaccharides to glucose. This chain is Exoglucanase 1 (CBH-1), found in Cryphonectria parasitica (Chestnut blight fungus).